Here is a 442-residue protein sequence, read N- to C-terminus: D-serine dehydratase (442 aa).

The residue at position 118 (Lys-118) is an N6-(pyridoxal phosphate)lysine.

Belongs to the serine/threonine dehydratase family. DsdA subfamily. As to quaternary structure, monomer. Pyridoxal 5'-phosphate serves as cofactor.

The enzyme catalyses D-serine = pyruvate + NH4(+). This is D-serine dehydratase from Escherichia coli (strain K12 / MC4100 / BW2952).